The sequence spans 355 residues: MISAAIVGGTGYTGIELIRLLSAHPEVSIDLLTSRSEAGTRADEIFPSLRGISDIVFSDLGDETLATLQQCDVVFFATPHGVAMQQAEALTEAGVKVIDLAADFRLQSLTDFEHWYQQSHACPELLKTAVYGLPEINRDKIANALVVGNPGCYPTTAILGLKPIIEAQNKQSKQLIESRIVIDAKSGVSGAGRQASLALNYAESTDNFKAYSVEGHRHLPEIEQGVAQLLDSQFSHRVRFLPHLVPMIRGMLSSIHMELTDAGALMDWQQVFEQSYASEQFIDVMPKGLYPDTRSVRASNRLRIAVHQDNERAELTVIVVQDNLVKGAAGQAVQNMNVMFGFDESLGLNFAPIVP.

The active site involves Cys152.

The protein belongs to the NAGSA dehydrogenase family. Type 1 subfamily.

It is found in the cytoplasm. It carries out the reaction N-acetyl-L-glutamate 5-semialdehyde + phosphate + NADP(+) = N-acetyl-L-glutamyl 5-phosphate + NADPH + H(+). Its pathway is amino-acid biosynthesis; L-arginine biosynthesis; N(2)-acetyl-L-ornithine from L-glutamate: step 3/4. Catalyzes the NADPH-dependent reduction of N-acetyl-5-glutamyl phosphate to yield N-acetyl-L-glutamate 5-semialdehyde. The polypeptide is N-acetyl-gamma-glutamyl-phosphate reductase (Psychrobacter arcticus (strain DSM 17307 / VKM B-2377 / 273-4)).